An 87-amino-acid chain; its full sequence is Small ribosomal subunit protein bS20 (87 aa).

Residues 1–21 (MANIKQQIKRNKTNEKRRLKN) form a disordered region. Residues 7–20 (QIKRNKTNEKRRLK) are compositionally biased toward basic residues.

This sequence belongs to the bacterial ribosomal protein bS20 family.

Its function is as follows. Binds directly to 16S ribosomal RNA. This is Small ribosomal subunit protein bS20 from Phytoplasma mali (strain AT).